A 296-amino-acid polypeptide reads, in one-letter code: 4-hydroxybenzoate octaprenyltransferase (296 aa).

A run of 8 helical transmembrane segments spans residues 28-48 (PIGI…AGKG), 52-72 (LKTV…GCVI), 102-122 (ALAL…FTNA), 146-166 (YYPQ…AFTA), 169-189 (GDLP…TVGY), 219-239 (VIIL…GARF), 241-261 (LGAC…WEFW), and 275-295 (FLHN…DYAV).

It belongs to the UbiA prenyltransferase family. The cofactor is Mg(2+).

The protein localises to the cell inner membrane. The catalysed reaction is all-trans-octaprenyl diphosphate + 4-hydroxybenzoate = 4-hydroxy-3-(all-trans-octaprenyl)benzoate + diphosphate. Its pathway is cofactor biosynthesis; ubiquinone biosynthesis. Its function is as follows. Catalyzes the prenylation of para-hydroxybenzoate (PHB) with an all-trans polyprenyl group. Mediates the second step in the final reaction sequence of ubiquinone-8 (UQ-8) biosynthesis, which is the condensation of the polyisoprenoid side chain with PHB, generating the first membrane-bound Q intermediate 3-octaprenyl-4-hydroxybenzoate. This is 4-hydroxybenzoate octaprenyltransferase from Pseudomonas savastanoi pv. phaseolicola (strain 1448A / Race 6) (Pseudomonas syringae pv. phaseolicola (strain 1448A / Race 6)).